Here is a 139-residue protein sequence, read N- to C-terminus: Ribulose bisphosphate carboxylase small subunit (139 aa).

It belongs to the RuBisCO small chain family. As to quaternary structure, heterohexadecamer of 8 large and 8 small subunits.

It localises to the plastid. Its subcellular location is the chloroplast. Functionally, ruBisCO catalyzes two reactions: the carboxylation of D-ribulose 1,5-bisphosphate, the primary event in carbon dioxide fixation, as well as the oxidative fragmentation of the pentose substrate in the photorespiration process. Both reactions occur simultaneously and in competition at the same active site. Although the small subunit is not catalytic it is essential for maximal activity. In Trieres chinensis (Marine centric diatom), this protein is Ribulose bisphosphate carboxylase small subunit.